We begin with the raw amino-acid sequence, 228 residues long: Phosphatidate cytidylyltransferase (228 aa).

6 helical membrane passes run F31 to L51, I65 to L85, L93 to G113, W131 to I151, I165 to I185, and G206 to I226.

The protein belongs to the CDS family.

It localises to the cell membrane. It carries out the reaction a 1,2-diacyl-sn-glycero-3-phosphate + CTP + H(+) = a CDP-1,2-diacyl-sn-glycerol + diphosphate. It participates in phospholipid metabolism; CDP-diacylglycerol biosynthesis; CDP-diacylglycerol from sn-glycerol 3-phosphate: step 3/3. The polypeptide is Phosphatidate cytidylyltransferase (cdsA) (Rickettsia typhi (strain ATCC VR-144 / Wilmington)).